The following is a 201-amino-acid chain: Small ribosomal subunit protein uS4c (201 aa).

A disordered region spans residues leucine 15 to glutamine 43. Residues methionine 89 to lysine 150 form the S4 RNA-binding domain.

It belongs to the universal ribosomal protein uS4 family. In terms of assembly, part of the 30S ribosomal subunit. Contacts protein S5. The interaction surface between S4 and S5 is involved in control of translational fidelity.

It is found in the plastid. The protein localises to the chloroplast. In terms of biological role, one of the primary rRNA binding proteins, it binds directly to 16S rRNA where it nucleates assembly of the body of the 30S subunit. Functionally, with S5 and S12 plays an important role in translational accuracy. The chain is Small ribosomal subunit protein uS4c (rps4) from Ceratophyllum demersum (Rigid hornwort).